The primary structure comprises 351 residues: Flap endonuclease 1 (351 aa).

The interval 1–98 (MDLAELVEEI…QELERRKKVK (98 aa)) is N-domain. Residues aspartate 27, aspartate 80, glutamate 154, glutamate 156, aspartate 175, aspartate 177, and aspartate 238 each coordinate Mg(2+). Residues 118–260 (ELKKYAQMSI…TAYRIIKKYG (143 aa)) form an I-domain region. An interaction with PCNA region spans residues 343–351 (RQTGLDQWF).

It belongs to the XPG/RAD2 endonuclease family. FEN1 subfamily. As to quaternary structure, interacts with PCNA. PCNA stimulates the nuclease activity without altering cleavage specificity. Mg(2+) serves as cofactor.

Structure-specific nuclease with 5'-flap endonuclease and 5'-3' exonuclease activities involved in DNA replication and repair. During DNA replication, cleaves the 5'-overhanging flap structure that is generated by displacement synthesis when DNA polymerase encounters the 5'-end of a downstream Okazaki fragment. Binds the unpaired 3'-DNA end and kinks the DNA to facilitate 5' cleavage specificity. Cleaves one nucleotide into the double-stranded DNA from the junction in flap DNA, leaving a nick for ligation. Also involved in the base excision repair (BER) pathway. Acts as a genome stabilization factor that prevents flaps from equilibrating into structures that lead to duplications and deletions. Also possesses 5'-3' exonuclease activity on nicked or gapped double-stranded DNA. In Sulfurisphaera tokodaii (strain DSM 16993 / JCM 10545 / NBRC 100140 / 7) (Sulfolobus tokodaii), this protein is Flap endonuclease 1.